The primary structure comprises 329 residues: Src kinase-associated phosphoprotein 2 (329 aa).

A disordered region spans residues 58–95 (YAEDSEEEEDWDSNEGGSLQSERTDKDEEACEGAQQAP). Residues 61–70 (DSEEEEDWDS) show a composition bias toward acidic residues. The PH domain occupies 104-207 (SVFKAGYLEK…WVKQIDFVLK (104 aa)). The segment at 240–263 (EDMPSPPPKVEPVSKHPPPTPAVD) is disordered. A compositionally biased stretch (pro residues) spans 243-260 (PSPPPKVEPVSKHPPPTP). An SH3 domain is found at 267-328 (DYANYYQGLW…PKDYLMELYA (62 aa)).

This sequence belongs to the SKAP family. Phosphorylated on tyrosines.

The protein localises to the cytoplasm. Functionally, may be involved in B-cell and macrophage adhesion processes. May play a role in src signaling pathway. The polypeptide is Src kinase-associated phosphoprotein 2 (skap2) (Takifugu rubripes (Japanese pufferfish)).